Reading from the N-terminus, the 177-residue chain is ATP-dependent protease subunit HslV (177 aa).

Residue threonine 6 is part of the active site. Positions 161, 164, and 167 each coordinate Na(+).

Belongs to the peptidase T1B family. HslV subfamily. As to quaternary structure, a double ring-shaped homohexamer of HslV is capped on each side by a ring-shaped HslU homohexamer. The assembly of the HslU/HslV complex is dependent on binding of ATP.

Its subcellular location is the cytoplasm. It carries out the reaction ATP-dependent cleavage of peptide bonds with broad specificity.. Allosterically activated by HslU binding. In terms of biological role, protease subunit of a proteasome-like degradation complex believed to be a general protein degrading machinery. The sequence is that of ATP-dependent protease subunit HslV from Thermodesulfovibrio yellowstonii (strain ATCC 51303 / DSM 11347 / YP87).